We begin with the raw amino-acid sequence, 953 residues long: uncharacterized protein (953 aa).

A run of 11 helical transmembrane segments spans residues 23–43 (VVTSLVSNGTIFGVFVIAFLI), 103–123 (YLFIIAIYCAVSMSYIFPILL), 148–168 (GRYFAHVFCGWIFFWGFLYII), 392–412 (VSAIVALVILWAFPVAFVGMI), 435–455 (LLGLLTSLAPTVALAVLMSFL), 481–501 (AYFAFQVIQVFLVTTLSSAAT), 540–560 (ISSGALLQIVPLILFYVLGAF), 575–595 (LSSMQWGTAFPVYTNLAVITF), 599–619 (IISPLILLFAAVAFFLLYIAY), 642–662 (LFQTIVGIYIGQICLLGLFAV), and 666–686 (WGPIVLQVIGICVTVLIHLHL). Residues 910–953 (VPPPYNDVKDEANGEANGEFDTASKENNPFADPKYKEEESRSAV) are disordered. The segment covering 942 to 953 (PKYKEEESRSAV) has biased composition (basic and acidic residues). Serine 949 is subject to Phosphoserine.

Belongs to the CSC1 (TC 1.A.17) family.

The protein localises to the membrane. Its function is as follows. Acts as an osmosensitive calcium-permeable cation channel. This is an uncharacterized protein from Saccharomyces cerevisiae (strain ATCC 204508 / S288c) (Baker's yeast).